Consider the following 350-residue polypeptide: Glycerol-1-phosphate dehydrogenase [NAD(P)+] (350 aa).

NAD(+)-binding positions include 96–100 and 118–121; these read GNIID and TAPS. Position 123 (aspartate 123) interacts with substrate. Serine 127 contributes to the NAD(+) binding site. Substrate is bound at residue aspartate 170. Zn(2+) is bound by residues aspartate 170 and histidine 250. Substrate is bound at residue histidine 254. Histidine 266 contacts Zn(2+).

The protein belongs to the glycerol-1-phosphate dehydrogenase family. Homodimer. It depends on Zn(2+) as a cofactor.

Its subcellular location is the cytoplasm. The enzyme catalyses sn-glycerol 1-phosphate + NAD(+) = dihydroxyacetone phosphate + NADH + H(+). The catalysed reaction is sn-glycerol 1-phosphate + NADP(+) = dihydroxyacetone phosphate + NADPH + H(+). It participates in membrane lipid metabolism; glycerophospholipid metabolism. Its function is as follows. Catalyzes the NAD(P)H-dependent reduction of dihydroxyacetonephosphate (DHAP or glycerone phosphate) to glycerol 1-phosphate (G1P). The G1P thus generated is used as the glycerophosphate backbone of phospholipids in the cellular membranes of Archaea. This is Glycerol-1-phosphate dehydrogenase [NAD(P)+] from Sulfurisphaera tokodaii (strain DSM 16993 / JCM 10545 / NBRC 100140 / 7) (Sulfolobus tokodaii).